A 216-amino-acid polypeptide reads, in one-letter code: Probable GTP-binding protein EngB (216 aa).

The EngB-type G domain occupies 23 to 197; it reads EGAEIAFAGR…EHKVAGWLGL (175 aa). GTP-binding positions include 31–38, 58–62, 76–79, 143–146, and 176–178; these read GRSNAGKS, GRTQL, DLPG, TKCD, and FSS. Residues Ser38 and Thr60 each contribute to the Mg(2+) site.

It belongs to the TRAFAC class TrmE-Era-EngA-EngB-Septin-like GTPase superfamily. EngB GTPase family. Mg(2+) is required as a cofactor.

In terms of biological role, necessary for normal cell division and for the maintenance of normal septation. This Aromatoleum aromaticum (strain DSM 19018 / LMG 30748 / EbN1) (Azoarcus sp. (strain EbN1)) protein is Probable GTP-binding protein EngB.